The chain runs to 152 residues: Kininogen-1c (152 aa).

The first 23 residues, 1–23 (MRLWFCLSLFIVLCLEHFPGTLA), serve as a signal peptide directing secretion. Residues 28–44 (VPESEEKTEQFLRDLPK) are compositionally biased toward basic and acidic residues. Positions 28–152 (VPESEEKTEQ…RGKFHSQSHV (125 aa)) are disordered.

This sequence belongs to the bradykinin-related peptide family. Expressed by the skin glands.

The protein localises to the secreted. Potent vasodilator. Binds B1 (BDKRB1) and B2 (BDKRB2) bradykinin receptors. The chain is Kininogen-1c from Bombina maxima (Giant fire-bellied toad).